The primary structure comprises 169 residues: Secreted LysM effector Blys5 (169 aa).

The signal sequence occupies residues 1–19; the sequence is MKLSVISAVFVSLAAAAAA. LysM domains are found at residues 47–94 and 121–167; these read TYYQ…YYCV and QWYK…NVCV.

This sequence belongs to the secreted LysM effector family.

Its function is as follows. Secreted effector that enables the plant pathogenic fungus to manipulate host defenses for successful infection. Required for the full virulence to infect insect hosts. Protects fungal hyphae against the hydrolytic activity of chitinase and plays an important role in evasion of insect immunities. Binds chitin and can additionally bind chitosan and cellulose. Coats and protects the cell walls of insect pathogens from host cell recognition and additionally shields fungal cells from the hydrolysis of insect chitinases. The chain is Secreted LysM effector Blys5 from Beauveria bassiana (strain ARSEF 2860) (White muscardine disease fungus).